Consider the following 416-residue polypeptide: Proline-serine-threonine phosphatase-interacting protein 1 (416 aa).

An F-BAR domain is found at 5-264 (LQFKDAFWCR…TLEGCSIDAD (260 aa)). A coiled-coil region spans residues 166 to 212 (HQKQVEKSQNKARQCKDSATEAERVYRQSIAQLEKVRAEWEQEHRTT). Residue S318 is modified to Phosphoserine. A Phosphotyrosine modification is found at Y345. An SH3 domain is found at 359-416 (SPAQEYRALYDYTAQNPDELDLSAGDILEVILEGEDGWWTVERNGQRGFVPGSYLEKL).

As to quaternary structure, homodimer. Homotrimer. Interacts (via coiled-coil domain) with CD2AP, PTPN12 and PTPN18. Interacts (via SH3 domain) with ABL1 and WAS. Interacts (via SH3 and coiled-coil domains) with MEFV (via B-box zinc finger); the interaction allows binding of MEFV to PYCARD and facilitates formation of PYCARD pyroptosomes. Interacts with CD2, DNM2 and FASLG. Dephosphorylated on Tyr-345 by PTPN18, this event negatively regulates the association of PSTPIP1 with SH2 domain-containing proteins as tyrosine kinase. Phosphorylation of Tyr-345 is probably required for subsequent phosphorylation at other tyrosine residues. Phosphorylation is induced by activation of the EGFR and PDGFR in a ABL1 dependent manner. The phosphorylation regulates the interaction with WAS and with MEFV. Highly expressed in the peripheral blood leukocytes, granulocytes and monocytes, namely in T-cells and natural killer cells, and in spleen. Weakly expressed in the thymus, small intestine, lung and placenta.

The protein localises to the cytoplasm. The protein resides in the cell membrane. Its subcellular location is the cell projection. It is found in the uropodium. It localises to the cytoskeleton. The protein localises to the perinuclear region. The protein resides in the lamellipodium. Its subcellular location is the cleavage furrow. Involved in regulation of the actin cytoskeleton. May regulate WAS actin-bundling activity. Bridges the interaction between ABL1 and PTPN18 leading to ABL1 dephosphorylation. May play a role as a scaffold protein between PTPN12 and WAS and allow PTPN12 to dephosphorylate WAS. Has the potential to physically couple CD2 and CD2AP to WAS. Acts downstream of CD2 and CD2AP to recruit WAS to the T-cell:APC contact site so as to promote the actin polymerization required for synapse induction during T-cell activation. Down-regulates CD2-stimulated adhesion through the coupling of PTPN12 to CD2. Also has a role in innate immunity and the inflammatory response. Recruited to inflammasomes by MEFV. Induces formation of pyroptosomes, large supramolecular structures composed of oligomerized PYCARD dimers which form prior to inflammatory apoptosis. Binding to MEFV allows MEFV to bind to PYCARD and facilitates pyroptosome formation. Regulates endocytosis and cell migration in neutrophils. The sequence is that of Proline-serine-threonine phosphatase-interacting protein 1 (PSTPIP1) from Homo sapiens (Human).